The primary structure comprises 459 residues: NADP-specific glutamate dehydrogenase (459 aa).

Residue K114 is part of the active site.

Belongs to the Glu/Leu/Phe/Val dehydrogenases family. In terms of assembly, homohexamer.

The catalysed reaction is L-glutamate + NADP(+) + H2O = 2-oxoglutarate + NH4(+) + NADPH + H(+). The sequence is that of NADP-specific glutamate dehydrogenase (gdhA) from Emericella nidulans (strain FGSC A4 / ATCC 38163 / CBS 112.46 / NRRL 194 / M139) (Aspergillus nidulans).